We begin with the raw amino-acid sequence, 154 residues long: Keratin-associated protein 9-4 (154 aa).

A run of 15 repeats spans residues 8-12 (CCQPT), 13-17 (CCRTT), 18-22 (CCRTT), 37-41 (CCQPS), 42-46 (CCVSS), 51-55 (CCRPT), 56-60 (CCQNT), 61-65 (CCQPT), 70-74 (CCQPS), 75-79 (CCSTP), 80-84 (CCQPT), 85-89 (CCGSS), 129-133 (CCRPA), 134-138 (CCETT), and 148-152 (CCQPF). The segment at 8–152 (CCQPTCCRTT…TCVSSCCQPF (145 aa)) is 15 X 5 AA repeats of C-C-[RQVGE]-[SPTN]-[TASPF].

It belongs to the KRTAP type 9 family. In terms of assembly, interacts with hair keratins.

Functionally, in the hair cortex, hair keratin intermediate filaments are embedded in an interfilamentous matrix, consisting of hair keratin-associated proteins (KRTAP), which are essential for the formation of a rigid and resistant hair shaft through their extensive disulfide bond cross-linking with abundant cysteine residues of hair keratins. The matrix proteins include the high-sulfur and high-glycine-tyrosine keratins. This is Keratin-associated protein 9-4 (KRTAP9-4) from Homo sapiens (Human).